Reading from the N-terminus, the 159-residue chain is NADH-quinone oxidoreductase subunit B (159 aa).

[4Fe-4S] cluster contacts are provided by C36, C37, C102, and C132.

This sequence belongs to the complex I 20 kDa subunit family. NDH-1 is composed of 14 different subunits. Subunits NuoB, C, D, E, F, and G constitute the peripheral sector of the complex. [4Fe-4S] cluster is required as a cofactor.

It is found in the cell inner membrane. It catalyses the reaction a quinone + NADH + 5 H(+)(in) = a quinol + NAD(+) + 4 H(+)(out). NDH-1 shuttles electrons from NADH, via FMN and iron-sulfur (Fe-S) centers, to quinones in the respiratory chain. Couples the redox reaction to proton translocation (for every two electrons transferred, four hydrogen ions are translocated across the cytoplasmic membrane), and thus conserves the redox energy in a proton gradient. This chain is NADH-quinone oxidoreductase subunit B, found in Paracidovorax citrulli (strain AAC00-1) (Acidovorax citrulli).